A 158-amino-acid polypeptide reads, in one-letter code: Phosphopantetheine adenylyltransferase (158 aa).

S8 is a binding site for substrate. ATP is bound by residues 8-9 (SF) and H16. Substrate is bound by residues K40, T72, and R86. Residues 87-89 (GLR), E97, and 122-128 (HSFLSSS) each bind ATP.

It belongs to the bacterial CoaD family. As to quaternary structure, homohexamer. Mg(2+) serves as cofactor.

It is found in the cytoplasm. The catalysed reaction is (R)-4'-phosphopantetheine + ATP + H(+) = 3'-dephospho-CoA + diphosphate. The protein operates within cofactor biosynthesis; coenzyme A biosynthesis; CoA from (R)-pantothenate: step 4/5. Its function is as follows. Reversibly transfers an adenylyl group from ATP to 4'-phosphopantetheine, yielding dephospho-CoA (dPCoA) and pyrophosphate. The sequence is that of Phosphopantetheine adenylyltransferase from Prochlorococcus marinus (strain NATL1A).